The sequence spans 236 residues: 1-(5-phosphoribosyl)-5-[(5-phosphoribosylamino)methylideneamino] imidazole-4-carboxamide isomerase (236 aa).

Aspartate 8 functions as the Proton acceptor in the catalytic mechanism. Catalysis depends on aspartate 127, which acts as the Proton donor.

This sequence belongs to the HisA/HisF family.

The protein resides in the cytoplasm. The catalysed reaction is 1-(5-phospho-beta-D-ribosyl)-5-[(5-phospho-beta-D-ribosylamino)methylideneamino]imidazole-4-carboxamide = 5-[(5-phospho-1-deoxy-D-ribulos-1-ylimino)methylamino]-1-(5-phospho-beta-D-ribosyl)imidazole-4-carboxamide. It functions in the pathway amino-acid biosynthesis; L-histidine biosynthesis; L-histidine from 5-phospho-alpha-D-ribose 1-diphosphate: step 4/9. This is 1-(5-phosphoribosyl)-5-[(5-phosphoribosylamino)methylideneamino] imidazole-4-carboxamide isomerase from Campylobacter concisus (strain 13826).